The primary structure comprises 423 residues: D-tagatose-1,6-bisphosphate aldolase subunit GatZ (423 aa).

This sequence belongs to the GatZ/KbaZ family. GatZ subfamily. In terms of assembly, forms a complex with GatY.

It participates in carbohydrate metabolism; D-tagatose 6-phosphate degradation; D-glyceraldehyde 3-phosphate and glycerone phosphate from D-tagatose 6-phosphate: step 2/2. In terms of biological role, component of the tagatose-1,6-bisphosphate aldolase GatYZ that is required for full activity and stability of the Y subunit. Could have a chaperone-like function for the proper and stable folding of GatY. When expressed alone, GatZ does not show any aldolase activity. Is involved in the catabolism of galactitol. In Salmonella choleraesuis (strain SC-B67), this protein is D-tagatose-1,6-bisphosphate aldolase subunit GatZ.